We begin with the raw amino-acid sequence, 272 residues long: Tryptophan synthase alpha chain (272 aa).

Residues Glu-49 and Asp-60 each act as proton acceptor in the active site.

It belongs to the TrpA family. Tetramer of two alpha and two beta chains.

The catalysed reaction is (1S,2R)-1-C-(indol-3-yl)glycerol 3-phosphate + L-serine = D-glyceraldehyde 3-phosphate + L-tryptophan + H2O. Its pathway is amino-acid biosynthesis; L-tryptophan biosynthesis; L-tryptophan from chorismate: step 5/5. The alpha subunit is responsible for the aldol cleavage of indoleglycerol phosphate to indole and glyceraldehyde 3-phosphate. In Psychrobacter cryohalolentis (strain ATCC BAA-1226 / DSM 17306 / VKM B-2378 / K5), this protein is Tryptophan synthase alpha chain.